Consider the following 402-residue polypeptide: LIM/homeobox protein Lhx5 (402 aa).

LIM zinc-binding domains follow at residues 3–61 and 62–125; these read VHCA…RRFG and TKCA…SSSL. The span at 124-148 shows a compositional bias: low complexity; sequence SLKEGSLNSVSSCTDRSLSPDLQDP. Disordered stretches follow at residues 124 to 186 and 298 to 402; these read SLKE…PRTT and HGPP…AAVW. Over residues 151–167 the composition is skewed to basic and acidic residues; that stretch reads DDPKETDNSTSSDKETA. The segment at residues 180-239 is a DNA-binding region (homeobox); that stretch reads RRGPRTTIKAKQLETLKAAFAATPKPTRHIREQLAQETGLNMRVIQVWFQNRRSKERRMK. Composition is skewed to low complexity over residues 300–311 and 322–336; these read PPSQAQSPADSS and PLGALEPPLAGPHGA.

Its subcellular location is the nucleus. Its function is as follows. Plays an essential role in the regulation of neuronal differentiation and migration during development of the central nervous system. This is LIM/homeobox protein Lhx5 (Lhx5) from Mus musculus (Mouse).